A 132-amino-acid chain; its full sequence is Prefoldin subunit alpha (132 aa).

It belongs to the prefoldin subunit alpha family. In terms of assembly, heterohexamer of two alpha and four beta subunits.

The protein localises to the cytoplasm. Functionally, molecular chaperone capable of stabilizing a range of proteins. Seems to fulfill an ATP-independent, HSP70-like function in archaeal de novo protein folding. The sequence is that of Prefoldin subunit alpha from Pyrobaculum islandicum (strain DSM 4184 / JCM 9189 / GEO3).